The chain runs to 366 residues: N-methyltransferase fsqC (366 aa).

The N-terminal stretch at 1–18 (MSSNVQDIRGWPPPFANA) is a signal peptide. N-linked (GlcNAc...) asparagine glycosylation is present at Asn-270.

This sequence belongs to the methyltransferase superfamily.

Its pathway is secondary metabolite biosynthesis. Functionally, N-methyltransferase; part of the gene cluster that mediates the biosynthesis of the isoquinoline alkaloids fumisoquin A, fumisoquin B and fumisoquin C; as well as small amounts of fumipyrrole as a shunt metabolite. The products of the cluster lead to a brown coloration and are important for growth and conidiation. The nonribosomal peptide synthetase-like protein fsqF, which lacks a canonical condensation domain, is required for addition of a serine-derived dehydroalanine moiety to activated tyrosine but is not essential for the subsequent steps leading to isoquinoline formation. A different enzyme, most likely the ATP-grasp enzyme fsqD, is responsible for activation of tyrosine. Three additional enzymes encoded by the fsq cluster, the N-methyltransferase fsqC, the phenol 2-monooxygenase fsqG and the FAD-dependent oxidase fsqB, catalyze the formation of the isoquinoline ring system in the fumisoquins. FsqB converts the fspF thiolation domain-bound (2S,4S,5S)-2-amino-6-(3,4-dihydroxyphenyl)-4-hydroxy-5-(methylamino)hexanoyl into isoquinoline. The cyclization most likely proceeds via a two-step mechanism, beginning with FAD-dependent oxidation of the methyl group to an iminium species followed by electrophilic attack on the deprotonated phenol. In Aspergillus fumigatus (strain ATCC MYA-4609 / CBS 101355 / FGSC A1100 / Af293) (Neosartorya fumigata), this protein is N-methyltransferase fsqC.